A 426-amino-acid chain; its full sequence is Serine--tRNA ligase (426 aa).

233-235 (TSE) is a binding site for L-serine. 264–266 (RSE) contacts ATP. Residue Glu-287 coordinates L-serine. ATP is bound at residue 351-354 (EISS). Residue Ser-387 coordinates L-serine.

Belongs to the class-II aminoacyl-tRNA synthetase family. Type-1 seryl-tRNA synthetase subfamily. In terms of assembly, homodimer. The tRNA molecule binds across the dimer.

The protein resides in the cytoplasm. It carries out the reaction tRNA(Ser) + L-serine + ATP = L-seryl-tRNA(Ser) + AMP + diphosphate + H(+). The catalysed reaction is tRNA(Sec) + L-serine + ATP = L-seryl-tRNA(Sec) + AMP + diphosphate + H(+). It participates in aminoacyl-tRNA biosynthesis; selenocysteinyl-tRNA(Sec) biosynthesis; L-seryl-tRNA(Sec) from L-serine and tRNA(Sec): step 1/1. Functionally, catalyzes the attachment of serine to tRNA(Ser). Is also able to aminoacylate tRNA(Sec) with serine, to form the misacylated tRNA L-seryl-tRNA(Sec), which will be further converted into selenocysteinyl-tRNA(Sec). In Xylella fastidiosa (strain M12), this protein is Serine--tRNA ligase.